A 1239-amino-acid polypeptide reads, in one-letter code: Codanin-1 (1239 aa).

At A2 the chain carries N-acetylalanine. Residues 61–72 (SRVLPQGPSTPA) are compositionally biased toward polar residues. 2 disordered regions span residues 61–249 (SRVL…PPGC) and 261–299 (KART…ADPA). The residue at position 70 (T70) is a Phosphothreonine. Composition is skewed to low complexity over residues 77–88 (ASAALPARQGAP), 95–116 (ARSQ…PLAR), and 138–179 (GAAE…LSNL). Residues 193–213 (AGRTKPSRRINPTPVSEERSL) are interaction with ASF1A/B. The segment covering 219-238 (CFTSPPISCVPSSQPSTLDT) has biased composition (polar residues). Position 270 is a phosphoserine (S270). The next 2 helical transmembrane spans lie at 317-337 (CIAE…LQLL) and 631-651 (FAVV…VAFL).

In terms of assembly, interacts with ASF1A and ASF1B. Found in a cytosolic complex with ASF1A, ASF1B, IPO4 and histones H3.1 and H4. Widely expressed in adult mice, the highest levels can be measured in erythropoietic cells.

Its subcellular location is the cytoplasm. It localises to the nucleus. It is found in the membrane. In terms of biological role, may act as a negative regulator of ASF1 in chromatin assembly. The sequence is that of Codanin-1 (Cdan1) from Mus musculus (Mouse).